Consider the following 674-residue polypeptide: Pesticidal crystal protein Cry24Aa (674 aa).

This sequence belongs to the delta endotoxin family.

Functionally, promotes colloidosmotic lysis by binding to the midgut epithelial cells of insects. The polypeptide is Pesticidal crystal protein Cry24Aa (cry24Aa) (Bacillus thuringiensis subsp. jegathesan).